A 703-amino-acid chain; its full sequence is Probable ATP-dependent RNA helicase vasa-like (703 aa).

Disordered regions lie at residues M1 to G22, N35 to G73, and R88 to F167. Over residues S61–G73 the composition is skewed to gly residues. The CCHC-type 1 zinc finger occupies C77–S92. A compositionally biased stretch (gly residues) spans F146 to R155. 2 consecutive CCHC-type zinc fingers follow at residues C166–S181 and C189–N204. A Q motif motif is present at residues E261–K289. The region spanning I292 to V475 is the Helicase ATP-binding domain. An ATP-binding site is contributed by A305–T312. The short motif at D419 to D422 is the DEAD box element. One can recognise a Helicase C-terminal domain in the interval M506–A651. Residues G676 to D703 form a disordered region.

This sequence belongs to the DEAD box helicase family. DDX4/VASA subfamily. Expressed in ovaries and testis. Not expressed in somatic tissue of the ovaries including follicle cells, muscle and connective tissue.

The protein resides in the cytoplasm. The protein localises to the nucleus. Its subcellular location is the nucleolus. It carries out the reaction ATP + H2O = ADP + phosphate + H(+). In terms of biological role, involved in translational control mechanisms operating in early stages of oogenesis. Required maternally in many stages of oogenesis, including cystocyte differentiation, oocyte differentiation, and specification of anterior-posterior polarity in the developing cysts. Essential for the formation and/or structural integrity of perinuclear nuage particles during germ cell formation. The chain is Probable ATP-dependent RNA helicase vasa-like from Penaeus vannamei (Whiteleg shrimp).